Consider the following 353-residue polypeptide: Phosphoribosylformylglycinamidine cyclo-ligase (353 aa).

This sequence belongs to the AIR synthase family.

The protein resides in the cytoplasm. It catalyses the reaction 2-formamido-N(1)-(5-O-phospho-beta-D-ribosyl)acetamidine + ATP = 5-amino-1-(5-phospho-beta-D-ribosyl)imidazole + ADP + phosphate + H(+). The protein operates within purine metabolism; IMP biosynthesis via de novo pathway; 5-amino-1-(5-phospho-D-ribosyl)imidazole from N(2)-formyl-N(1)-(5-phospho-D-ribosyl)glycinamide: step 2/2. The chain is Phosphoribosylformylglycinamidine cyclo-ligase from Pseudomonas aeruginosa (strain ATCC 15692 / DSM 22644 / CIP 104116 / JCM 14847 / LMG 12228 / 1C / PRS 101 / PAO1).